We begin with the raw amino-acid sequence, 493 residues long: Ketol-acid reductoisomerase (NADP(+)) (493 aa).

Positions 14 to 208 (LDQLGRCRFM…GGHRAGVLES (195 aa)) constitute a KARI N-terminal Rossmann domain. NADP(+)-binding positions include 45 to 48 (CGAQ), R68, R76, S78, and 108 to 110 (DKQ). H132 is an active-site residue. G158 lines the NADP(+) pocket. KARI C-terminal knotted domains follow at residues 209–345 (SFVA…APKG) and 346–486 (ENIK…MTDM). Positions 217, 221, 390, and 394 each coordinate Mg(2+). A substrate-binding site is contributed by S415.

It belongs to the ketol-acid reductoisomerase family. Mg(2+) serves as cofactor.

The enzyme catalyses (2R)-2,3-dihydroxy-3-methylbutanoate + NADP(+) = (2S)-2-acetolactate + NADPH + H(+). It carries out the reaction (2R,3R)-2,3-dihydroxy-3-methylpentanoate + NADP(+) = (S)-2-ethyl-2-hydroxy-3-oxobutanoate + NADPH + H(+). The protein operates within amino-acid biosynthesis; L-isoleucine biosynthesis; L-isoleucine from 2-oxobutanoate: step 2/4. Its pathway is amino-acid biosynthesis; L-valine biosynthesis; L-valine from pyruvate: step 2/4. In terms of biological role, involved in the biosynthesis of branched-chain amino acids (BCAA). Catalyzes an alkyl-migration followed by a ketol-acid reduction of (S)-2-acetolactate (S2AL) to yield (R)-2,3-dihydroxy-isovalerate. In the isomerase reaction, S2AL is rearranged via a Mg-dependent methyl migration to produce 3-hydroxy-3-methyl-2-ketobutyrate (HMKB). In the reductase reaction, this 2-ketoacid undergoes a metal-dependent reduction by NADPH to yield (R)-2,3-dihydroxy-isovalerate. The protein is Ketol-acid reductoisomerase (NADP(+)) of Histophilus somni (strain 129Pt) (Haemophilus somnus).